A 582-amino-acid polypeptide reads, in one-letter code: Aspartate--tRNA ligase (582 aa).

E174 lines the L-aspartate pocket. An aspartate region spans residues 198–201 (QITK). R220 is an L-aspartate binding site. Residues 220 to 222 (RDE) and Q229 each bind ATP. L-aspartate is bound at residue H443. E477 provides a ligand contact to ATP. R484 contacts L-aspartate. Residue 529 to 532 (GLDR) coordinates ATP.

It belongs to the class-II aminoacyl-tRNA synthetase family. Type 1 subfamily. In terms of assembly, homodimer.

The protein localises to the cytoplasm. The enzyme catalyses tRNA(Asp) + L-aspartate + ATP = L-aspartyl-tRNA(Asp) + AMP + diphosphate. Functionally, catalyzes the attachment of L-aspartate to tRNA(Asp) in a two-step reaction: L-aspartate is first activated by ATP to form Asp-AMP and then transferred to the acceptor end of tRNA(Asp). The protein is Aspartate--tRNA ligase of Streptococcus pyogenes serotype M3 (strain ATCC BAA-595 / MGAS315).